A 135-amino-acid chain; its full sequence is Nucleoside diphosphate kinase (135 aa).

ATP contacts are provided by Lys9, Tyr57, Arg85, Thr91, Arg102, and Asn112. His115 functions as the Pros-phosphohistidine intermediate in the catalytic mechanism.

The protein belongs to the NDK family. In terms of assembly, homotetramer. It depends on Mg(2+) as a cofactor.

The protein resides in the cytoplasm. It carries out the reaction a 2'-deoxyribonucleoside 5'-diphosphate + ATP = a 2'-deoxyribonucleoside 5'-triphosphate + ADP. It catalyses the reaction a ribonucleoside 5'-diphosphate + ATP = a ribonucleoside 5'-triphosphate + ADP. Functionally, major role in the synthesis of nucleoside triphosphates other than ATP. The ATP gamma phosphate is transferred to the NDP beta phosphate via a ping-pong mechanism, using a phosphorylated active-site intermediate. The protein is Nucleoside diphosphate kinase of Thermoanaerobacter pseudethanolicus (strain ATCC 33223 / 39E) (Clostridium thermohydrosulfuricum).